The following is a 192-amino-acid chain: Cytidylate kinase (192 aa).

Residue 12–20 (GLAGSGTTT) participates in ATP binding.

It belongs to the cytidylate kinase family. Type 2 subfamily.

The protein localises to the cytoplasm. The catalysed reaction is CMP + ATP = CDP + ADP. It catalyses the reaction dCMP + ATP = dCDP + ADP. The sequence is that of Cytidylate kinase (cmk) from Pyrococcus horikoshii (strain ATCC 700860 / DSM 12428 / JCM 9974 / NBRC 100139 / OT-3).